The following is a 158-amino-acid chain: 6,7-dimethyl-8-ribityllumazine synthase (158 aa).

5-amino-6-(D-ribitylamino)uracil contacts are provided by residues Phe-23, Ser-61–Glu-63, and Ala-85–Ile-87. Residue Glu-90–Thr-91 participates in (2S)-2-hydroxy-3-oxobutyl phosphate binding. Residue His-93 is the Proton donor of the active site. Phe-118 is a 5-amino-6-(D-ribitylamino)uracil binding site. A (2S)-2-hydroxy-3-oxobutyl phosphate-binding site is contributed by Arg-132.

The protein belongs to the DMRL synthase family.

It carries out the reaction (2S)-2-hydroxy-3-oxobutyl phosphate + 5-amino-6-(D-ribitylamino)uracil = 6,7-dimethyl-8-(1-D-ribityl)lumazine + phosphate + 2 H2O + H(+). It functions in the pathway cofactor biosynthesis; riboflavin biosynthesis; riboflavin from 2-hydroxy-3-oxobutyl phosphate and 5-amino-6-(D-ribitylamino)uracil: step 1/2. Its function is as follows. Catalyzes the formation of 6,7-dimethyl-8-ribityllumazine by condensation of 5-amino-6-(D-ribitylamino)uracil with 3,4-dihydroxy-2-butanone 4-phosphate. This is the penultimate step in the biosynthesis of riboflavin. This Prochlorococcus marinus (strain MIT 9312) protein is 6,7-dimethyl-8-ribityllumazine synthase.